The chain runs to 369 residues: tRNA 2-selenouridine synthase (369 aa).

A Rhodanese domain is found at 15–138 (MLSGHPMMDV…MRQYLIEVID (124 aa)). Cysteine 98 serves as the catalytic S-selanylcysteine intermediate.

It belongs to the SelU family. In terms of assembly, monomer.

It catalyses the reaction 5-methylaminomethyl-2-thiouridine(34) in tRNA + selenophosphate + (2E)-geranyl diphosphate + H2O + H(+) = 5-methylaminomethyl-2-selenouridine(34) in tRNA + (2E)-thiogeraniol + phosphate + diphosphate. The enzyme catalyses 5-methylaminomethyl-2-thiouridine(34) in tRNA + (2E)-geranyl diphosphate = 5-methylaminomethyl-S-(2E)-geranyl-thiouridine(34) in tRNA + diphosphate. It carries out the reaction 5-methylaminomethyl-S-(2E)-geranyl-thiouridine(34) in tRNA + selenophosphate + H(+) = 5-methylaminomethyl-2-(Se-phospho)selenouridine(34) in tRNA + (2E)-thiogeraniol. The catalysed reaction is 5-methylaminomethyl-2-(Se-phospho)selenouridine(34) in tRNA + H2O = 5-methylaminomethyl-2-selenouridine(34) in tRNA + phosphate. In terms of biological role, involved in the post-transcriptional modification of the uridine at the wobble position (U34) of tRNA(Lys), tRNA(Glu) and tRNA(Gln). Catalyzes the conversion of 2-thiouridine (S2U-RNA) to 2-selenouridine (Se2U-RNA). Acts in a two-step process involving geranylation of 2-thiouridine (S2U) to S-geranyl-2-thiouridine (geS2U) and subsequent selenation of the latter derivative to 2-selenouridine (Se2U) in the tRNA chain. The polypeptide is tRNA 2-selenouridine synthase (Shewanella sediminis (strain HAW-EB3)).